The chain runs to 261 residues: 7beta-hydroxysteroid dehydrogenase (261 aa).

NADP(+)-binding positions include 17 to 21 (TEGIG), 40 to 41 (RR), and 66 to 67 (DL). Y156 functions as the Proton acceptor in the catalytic mechanism.

The protein belongs to the short-chain dehydrogenases/reductases (SDR) family. Homodimer.

It catalyses the reaction a 7beta-hydroxysteroid + NADP(+) = a 7-oxosteroid + NADPH + H(+). The enzyme catalyses ursocholate + NADP(+) = 3alpha,12alpha-dihydroxy-7-oxo-5beta-cholanate + NADPH + H(+). The catalysed reaction is 7-oxolithocholate + NADPH + H(+) = ursodeoxycholate + NADP(+). It carries out the reaction 3alpha,7beta-dihydroxy-12-oxo-5beta-cholan-24-oate + NADP(+) = 7,12-dioxo-lithocholate + NADPH + H(+). It catalyses the reaction 7beta-hydroxy-3,12-dioxo-5beta-cholan-24-oate + NADP(+) = dehydrocholate + NADPH + H(+). Its function is as follows. 7beta-hydroxysteroid dehydrogenase that catalyzes the reduction of the 7-oxo group of 7-oxosteroids, such as 3alpha,12alpha-dihydroxy-7-oxo-5beta-cholanate, 7-oxolithocholate, 7,12-dioxo-lithocholate and dehydrocholate, to the corresponding 7beta-hydroxysteroids. Is also able to catalyze the reverse oxidation reactions. Together with 7alpha-HSDH encoded in the adjacent gene, is likely involved in the epimerization of the hydroxy group at C-7 of primary bile acids through 7-keto bile acid intermediates. This chain is 7beta-hydroxysteroid dehydrogenase, found in Clostridium sardiniense (Clostridium absonum).